We begin with the raw amino-acid sequence, 68 residues long: Adipokinetic prohormone type 1 (68 aa).

The N-terminal stretch at 1-20 (MNKIYFVIVFVACFCLFAEA) is a signal peptide. Position 21 is a pyrrolidone carboxylic acid (Gln-21). Gly-30 is subject to Glycine amide. Residues 34 to 68 (SGVAPMSCKNEEAVATIFKLIQNEAERFIICQQKS) constitute a propeptide that is removed on maturation.

Expressed in antennal lobe (AL), corpora cardiaca (CC), corpora allata (CA) and gnathal ganglion (GNG) (at protein level). Expression in CC and CA detected in all animals, expression in GNG in some animals and in AL in few animals (at protein level).

The protein localises to the secreted. This hormone, released from cells in the corpora cardiaca, causes release of diglycerides from the fat body and stimulation of muscles to use these diglycerides as an energy source during energy-demanding processes. The polypeptide is Adipokinetic prohormone type 1 (Agrotis ipsilon (Black cutworm moth)).